Consider the following 254-residue polypeptide: Insulin-like growth factor-binding protein 4 (254 aa).

The signal sequence occupies residues 1 to 21 (MLPFGLVAALLLAAGPRPSLG). An IGFBP N-terminal domain is found at 23 to 103 (EAIHCPPCSE…MHGQGVCTEL (81 aa)). 6 disulfide bridges follow: Cys-27–Cys-53, Cys-30–Cys-55, Cys-38–Cys-56, Cys-44–Cys-59, Cys-67–Cys-80, and Cys-74–Cys-100. The N-linked (GlcNAc...) asparagine glycan is linked to Asn-125. 4 disulfides stabilise this stretch: Cys-131/Cys-138, Cys-170/Cys-200, Cys-211/Cys-222, and Cys-224/Cys-245. The Thyroglobulin type-1 domain occupies 167-245 (QGSCQSELHR…GLEPKGELDC (79 aa)). Ser-251 is modified (phosphoserine).

As to quaternary structure, binds IGF2 more than IGF1.

The protein localises to the secreted. Its function is as follows. IGF-binding proteins prolong the half-life of the IGFs and have been shown to either inhibit or stimulate the growth promoting effects of the IGFs on cell culture. They alter the interaction of IGFs with their cell surface receptors. The protein is Insulin-like growth factor-binding protein 4 (Igfbp4) of Mus musculus (Mouse).